Consider the following 125-residue polypeptide: Basic leucine zipper transcriptional factor ATF-like (125 aa).

Low complexity predominate over residues 1-14 (MPHSSDSSDSSFSR). The tract at residues 1–59 (MPHSSDSSDSSFSRSPPPGKQDSSDDVRKVQRREKNRIAAQKSRQRQTQKADTLHLESE) is disordered. Residues 26–89 (DVRKVQRREK…KYFTSVLSSH (64 aa)) form the bZIP domain. The basic motif stretch occupies residues 28-50 (RKVQRREKNRIAAQKSRQRQTQK). Ser-43 carries the post-translational modification Phosphoserine. Thr-48 is modified (phosphothreonine). Residues 54–75 (LHLESEDLEKQNAALRKEIKQL) form a leucine-zipper region.

It belongs to the bZIP family. As to quaternary structure, heterodimer; mainly heterodimerizes with JUNB. The BATF-JUNB heterodimer interacts with IRF4 and IRF8. Interacts (via bZIP domain) with IRF4 and IRF8; the interaction is direct. Also forms heterodimers with JUN and JUND. Interacts with IFI35. Post-translationally, phosphorylated on serine and threonine residues and at least one tyrosine residue. Phosphorylation at Ser-43 inhibit DNA binding activity and transforms it as a negative regulator of AP-1 mediated transcription. As to expression, detected in postnatal and adult lymphoid tissues such as thymus, spleen and lymph nodes. In thymus most concentrated expression is found in the immediate cortical layer. Differentially expressed during T-cell development in thymus. Highly expressed in Th17, Th1 and Th2 cells and in activated B-cells.

The protein localises to the nucleus. It is found in the cytoplasm. Functionally, AP-1 family transcription factor that controls the differentiation of lineage-specific cells in the immune system: specifically mediates the differentiation of T-helper 17 cells (Th17), follicular T-helper cells (TfH), CD8(+) dendritic cells and class-switch recombination (CSR) in B-cells. Acts via the formation of a heterodimer with JUNB that recognizes and binds DNA sequence 5'-TGA[CG]TCA-3'. The BATF-JUNB heterodimer also forms a complex with IRF4 (or IRF8) in immune cells, leading to recognition of AICE sequence (5'-TGAnTCA/GAAA-3'), an immune-specific regulatory element, followed by cooperative binding of BATF and IRF4 (or IRF8) and activation of genes. Controls differentiation of T-helper cells producing interleukin-17 (Th17 cells) by binding to Th17-associated gene promoters: regulates expression of the transcription factor RORC itself and RORC target genes such as IL17 (IL17A or IL17B). Also involved in differentiation of follicular T-helper cells (TfH) by directing expression of BCL6 and MAF. In B-cells, involved in class-switch recombination (CSR) by controlling the expression of both AICDA and of germline transcripts of the intervening heavy-chain region and constant heavy-chain region (I(H)-C(H)). Following infection, can participate in CD8(+) dendritic cell differentiation via interaction with IRF4 and IRF8 to mediate cooperative gene activation. Regulates effector CD8(+) T-cell differentiation by regulating expression of SIRT1. Following DNA damage, part of a differentiation checkpoint that limits self-renewal of hematopoietic stem cells (HSCs): up-regulated by STAT3, leading to differentiation of HSCs, thereby restricting self-renewal of HSCs. The protein is Basic leucine zipper transcriptional factor ATF-like (Batf) of Mus musculus (Mouse).